A 250-amino-acid chain; its full sequence is tRNA pseudouridine synthase A (250 aa).

Catalysis depends on Asp-52, which acts as the Nucleophile. Tyr-111 is a substrate binding site.

Belongs to the tRNA pseudouridine synthase TruA family. In terms of assembly, homodimer.

It catalyses the reaction uridine(38/39/40) in tRNA = pseudouridine(38/39/40) in tRNA. Formation of pseudouridine at positions 38, 39 and 40 in the anticodon stem and loop of transfer RNAs. The chain is tRNA pseudouridine synthase A from Methylorubrum extorquens (strain PA1) (Methylobacterium extorquens).